Reading from the N-terminus, the 89-residue chain is Dolichol-phosphate mannose synthase subunit 3 (89 aa).

2 consecutive transmembrane segments (helical) span residues 7-27 and 33-53; these read ILSL…AAII and WLLP…MVGV.

The protein belongs to the DPM3 family. In terms of assembly, component of the dolichol-phosphate mannose (DPM) synthase complex composed of DPMS1, DPMS2 and DPMS3; in the complex interacts directly with DPMS1 and DPMS2.

Its subcellular location is the endoplasmic reticulum membrane. Its pathway is protein modification; protein glycosylation. In terms of biological role, regulates the biosynthesis of dolichol phosphate-mannose. Regulatory subunit of the dolichol-phosphate mannose (DPM) synthase complex; essential for the ER localization and stable expression of DPMS1. In Arabidopsis thaliana (Mouse-ear cress), this protein is Dolichol-phosphate mannose synthase subunit 3.